The chain runs to 109 residues: Aquaporin-2 (109 aa).

Topologically, residues 1 to 6 (SIAFSR) are cytoplasmic. A helical transmembrane segment spans residues 7-27 (AVFSEFLATLLFVFFGLGSAL). Over 28-35 (NWPQALPS) the chain is Extracellular. The helical transmembrane segment at 36-54 (VLQIAMAFGLAIGTLVQAL) threads the bilayer. Topologically, residues 55 to 59 (GHISG) are cytoplasmic. The discontinuously helical intramembrane region spans 60-69 (AHINPAVTVA). An NPA 1 motif is present at residues 63–65 (NPA). Topologically, residues 70-80 (CLVGCHVSFLR) are cytoplasmic. Residues 81-102 (ATFYLAAQLLGAVAGAAILHEI) form a helical membrane-spanning segment. Over 103–109 (TPPDIRG) the chain is Extracellular.

Belongs to the MIP/aquaporin (TC 1.A.8) family. In terms of assembly, homotetramer. In terms of processing, serine phosphorylation is necessary and sufficient for expression at the apical membrane. Endocytosis is not phosphorylation-dependent. N-glycosylated.

The protein resides in the apical cell membrane. It is found in the basolateral cell membrane. Its subcellular location is the cell membrane. The protein localises to the cytoplasmic vesicle membrane. It localises to the golgi apparatus. The protein resides in the trans-Golgi network membrane. The enzyme catalyses H2O(in) = H2O(out). It catalyses the reaction glycerol(in) = glycerol(out). Its function is as follows. Forms a water-specific channel that provides the plasma membranes of renal collecting duct with high permeability to water, thereby permitting water to move in the direction of an osmotic gradient. Plays an essential role in renal water homeostasis. Could also be permeable to glycerol. The polypeptide is Aquaporin-2 (Dugong dugon (Dugong)).